A 163-amino-acid polypeptide reads, in one-letter code: Protein GOLVEN 3 (163 aa).

A signal peptide spans 1–20 (MMRFTIIVIAFLLIIQSLEE). A propeptide spanning residues 21-141 (EHILVYAHEG…MEKLARLLRD (121 aa)) is cleaved from the precursor. Tyrosine 143 bears the Sulfotyrosine mark. A disordered region spans residues 144–163 (PIYSKPRRKPPVNNRAPDKF). Position 154 is a hydroxyproline (proline 154). A propeptide spanning residues 158-163 (RAPDKF) is cleaved from the precursor.

Belongs to the RGF family. As to quaternary structure, binds to LRR receptor-like serine/threonine-protein kinases RGI1, RGI2 and RGI3 to trigger their dimerization with SERK proteins and subsequent signaling. In terms of tissue distribution, expressed in roots, specifically in the root apical meristem (RAM).

It localises to the secreted. Functionally, signaling peptide (root growth factor) required during root gravitropism in a PIN2-traffic dependent manner, thus influencing the formation of auxin gradients. Maintains the postembryonic root stem cell niche. This Arabidopsis thaliana (Mouse-ear cress) protein is Protein GOLVEN 3.